The following is a 241-amino-acid chain: Ras-like protein 1 (241 aa).

GTP-binding positions include 17 to 22 (GVGKTA), 33 to 39 (VETYDPT), 63 to 64 (AG), 138 to 141 (NKSD), and 168 to 170 (SAK). An Effector region motif is present at residues 36-44 (YDPTIEDSY). Residues 190–241 (RQQASRPSLPGNSRTKTGGMGKSESFYQSDGKRGSRKDGEKHRSKPIKCVIL) are disordered. Positions 191 to 205 (QQASRPSLPGNSRTK) are enriched in polar residues. Positions 219-230 (DGKRGSRKDGEK) are enriched in basic and acidic residues. The residue at position 238 (C238) is a Cysteine methyl ester. C238 carries the S-farnesyl cysteine lipid modification. Positions 239 to 241 (VIL) are cleaved as a propeptide — removed in mature form.

Belongs to the small GTPase superfamily. Ras family. As to quaternary structure, interacts with farnesyltransferase beta subunit RAM1.

The protein resides in the cell membrane. Alternates between an inactive form bound to GDP and an active form bound to GTP. Activated by a guanine nucleotide-exchange factor (GEF) and inactivated by a GTPase-activating protein (GAP). Modulates the activity of the adenylate cyclase catalytic subunit and therefore affects the biosynthesis of cyclic-AMP. Plays a role in both surface attachment and surface recognition of appressoria, a highly specialized infection structure for plant penetration. Regulates appressorium formation by coordinated regulation of cAMP signaling and Pmk1 MAPK pathways. This is Ras-like protein 1 from Pyricularia oryzae (strain 70-15 / ATCC MYA-4617 / FGSC 8958) (Rice blast fungus).